A 241-amino-acid chain; its full sequence is Proteasome subunit beta type-1 (241 aa).

The residue at position 1 (methionine 1) is an N-acetylmethionine. Residues 1–28 (MLSSTAMYSAPGRDLGMEPHRAAGPLQL) constitute a propeptide that is removed on maturation. A glycan (O-linked (GlcNAc) serine) is linked at serine 58. Phosphoserine occurs at positions 62 and 68. Residue tyrosine 150 is modified to Phosphotyrosine. Serine 162 bears the Phosphoserine mark. Lysine 204 carries the post-translational modification N6-acetyllysine. An O-linked (GlcNAc) serine glycan is attached at serine 209.

It belongs to the peptidase T1B family. As to quaternary structure, the 26S proteasome consists of a 20S proteasome core and two 19S regulatory subunits. The 20S proteasome core is a barrel-shaped complex made of 28 subunits that are arranged in four stacked rings. The two outer rings are each formed by seven alpha subunits, and the two inner rings are formed by seven beta subunits. The proteolytic activity is exerted by three beta-subunits PSMB5, PSMB6 and PSMB7. Interacts with SERPINB2. Interacts with RFPL4A. (Microbial infection) Interacts with HIV-1 protein Tat.

Its subcellular location is the cytoplasm. It is found in the nucleus. Its function is as follows. Non-catalytic component of the 20S core proteasome complex involved in the proteolytic degradation of most intracellular proteins. This complex plays numerous essential roles within the cell by associating with different regulatory particles. Associated with two 19S regulatory particles, forms the 26S proteasome and thus participates in the ATP-dependent degradation of ubiquitinated proteins. The 26S proteasome plays a key role in the maintenance of protein homeostasis by removing misfolded or damaged proteins that could impair cellular functions, and by removing proteins whose functions are no longer required. Associated with the PA200 or PA28, the 20S proteasome mediates ubiquitin-independent protein degradation. This type of proteolysis is required in several pathways including spermatogenesis (20S-PA200 complex) or generation of a subset of MHC class I-presented antigenic peptides (20S-PA28 complex). The chain is Proteasome subunit beta type-1 from Homo sapiens (Human).